A 250-amino-acid polypeptide reads, in one-letter code: uncharacterized protein (250 aa).

A helical transmembrane segment spans residues 4–24 (FKYLLFLVVFAVFFLTFAFFD).

The protein resides in the membrane. This is an uncharacterized protein from Methanocaldococcus jannaschii (strain ATCC 43067 / DSM 2661 / JAL-1 / JCM 10045 / NBRC 100440) (Methanococcus jannaschii).